Here is a 464-residue protein sequence, read N- to C-terminus: mRNA capping enzyme LEF-4 (464 aa).

The segment at 1–204 (MDYGDFVIEK…NVMCNIIADM (204 aa)) is mRNA triphosphatase. Positions 205–464 (EALTDAQNIS…KHRRDRIVPN (260 aa)) are mRNA guanylyltransferase. Lys255 functions as the N6-GMP-lysine intermediate in the catalytic mechanism.

Belongs to the baculoviridae LEF-4 family. Interacts with LEF-8, LEF-9, and p47.

The protein resides in the host cytoplasm. Its subcellular location is the host nucleus. It catalyses the reaction a 5'-end diphospho-ribonucleoside in mRNA + GTP + H(+) = a 5'-end (5'-triphosphoguanosine)-ribonucleoside in mRNA + diphosphate. The enzyme catalyses a 5'-end triphospho-ribonucleoside in mRNA + H2O = a 5'-end diphospho-ribonucleoside in mRNA + phosphate + H(+). Functionally, component of the viral DNA-dependent RNA polymerase that catalyzes two reactions involved in viral RNA cap formation: an RNA 5'-triphosphatase that hydrolyzes the gamma phosphate of triphosphate-terminated RNA and a guanylyltransferase that reacts with GTP to form a covalent protein-guanylate adduct. Therefore plays an essential role in late and very late gene expression. In Autographa californica nuclear polyhedrosis virus (AcMNPV), this protein is mRNA capping enzyme LEF-4 (LEF-4).